The sequence spans 98 residues: Small ribosomal subunit protein bS20 (98 aa).

Over residues 1–12 (MAPRKPSKKVGP) the composition is skewed to basic residues. Positions 1 to 34 (MAPRKPSKKVGPQKRPSAEKRVITSKKKQLRNQS) are disordered.

Belongs to the bacterial ribosomal protein bS20 family.

Functionally, binds directly to 16S ribosomal RNA. The chain is Small ribosomal subunit protein bS20 from Chlamydia muridarum (strain MoPn / Nigg).